The chain runs to 357 residues: NADH-quinone oxidoreductase subunit H (357 aa).

Transmembrane regions (helical) follow at residues 20 to 40 (WLLV…MGCV), 92 to 112 (ALFV…WAVI), 127 to 147 (LLFV…AGWA), 165 to 185 (ISYE…SGSL), 203 to 223 (GLTF…IYII), 259 to 279 (FFLA…LMFL), 294 to 314 (IPGW…FIWF), and 329 to 349 (LGWK…AIWM).

It belongs to the complex I subunit 1 family. NDH-1 is composed of 14 different subunits. Subunits NuoA, H, J, K, L, M, N constitute the membrane sector of the complex.

The protein localises to the cell inner membrane. It catalyses the reaction a quinone + NADH + 5 H(+)(in) = a quinol + NAD(+) + 4 H(+)(out). Its function is as follows. NDH-1 shuttles electrons from NADH, via FMN and iron-sulfur (Fe-S) centers, to quinones in the respiratory chain. The immediate electron acceptor for the enzyme in this species is believed to be ubiquinone. Couples the redox reaction to proton translocation (for every two electrons transferred, four hydrogen ions are translocated across the cytoplasmic membrane), and thus conserves the redox energy in a proton gradient. This subunit may bind ubiquinone. This Herminiimonas arsenicoxydans protein is NADH-quinone oxidoreductase subunit H.